Consider the following 207-residue polypeptide: MDSTKSTEETAINIPRESSSTKHKIAVAAVKAVATPHKRGGMKRGVAIFDFILRICALAAALAATATMGTTDQTLPFFTQFFQFQASYDDLPTFTFFVIANAIASGYLVLSLPFSIVAIVRPHVTGVKLLLLILDTVLVAFTTAAAASAAAIVYLAHNGNSNTNWFAICQQFNDFCQRTSGAVVASFIAAAIFIFLVVLSAVALRRH.

Topologically, residues 1 to 45 (MDSTKSTEETAINIPRESSSTKHKIAVAAVKAVATPHKRGGMKRG) are cytoplasmic. Residues 46-66 (VAIFDFILRICALAAALAATA) form a helical membrane-spanning segment. At 67-95 (TMGTTDQTLPFFTQFFQFQASYDDLPTFT) the chain is on the extracellular side. Residues 96–116 (FFVIANAIASGYLVLSLPFSI) form a helical membrane-spanning segment. Topologically, residues 117–128 (VAIVRPHVTGVK) are cytoplasmic. Residues 129-149 (LLLLILDTVLVAFTTAAAASA) form a helical membrane-spanning segment. Topologically, residues 150 to 181 (AAIVYLAHNGNSNTNWFAICQQFNDFCQRTSG) are extracellular. Residues 182–202 (AVVASFIAAAIFIFLVVLSAV) traverse the membrane as a helical segment. Residues 203–207 (ALRRH) are Cytoplasmic-facing.

It belongs to the Casparian strip membrane proteins (CASP) family. As to quaternary structure, homodimer and heterodimers.

The protein localises to the cell membrane. Regulates membrane-cell wall junctions and localized cell wall deposition. Required for establishment of the Casparian strip membrane domain (CSD) and the subsequent formation of Casparian strips, a cell wall modification of the root endodermis that determines an apoplastic barrier between the intraorganismal apoplasm and the extraorganismal apoplasm and prevents lateral diffusion. This is Casparian strip membrane protein 3 from Erythranthe guttata (Yellow monkey flower).